The sequence spans 3674 residues: Dystrophin (3674 aa).

An actin-binding region spans residues Met-1–Pro-236. Calponin-homology (CH) domains lie at Asp-11 to Gln-115 and Thr-130 to Pro-236. The ANK2- and ANK-3 binding stretch occupies residues Pro-59 to His-68. The span at Ser-306–Leu-318 shows a compositional bias: polar residues. Positions Ser-306–Ser-325 are disordered. Spectrin repeat units lie at residues Val-335–Lys-443, Val-444–Asp-552, Leu-555–Gln-663, Glu-715–Tyr-824, Asn-826–Ile-930, Arg-939–Glu-1041, Ala-1044–Gly-1150, Asp-1153–Glu-1259, Ala-1262–Gln-1363, Ser-1364–Lys-1459, Glu-1464–Lys-1564, Lys-1567–Glu-1672, Lys-1675–Ile-1774, Pro-1775–Glu-1870, His-1873–Glu-1975, Glu-1988–Arg-2097, Glu-2100–Glu-2204, Asn-2207–Ala-2314, His-2315–Lys-2412, Phe-2464–Glu-2566, Lys-2569–Glu-2675, Arg-2678–Ala-2791, Lys-2797–Asp-2919, and Arg-2924–Glu-3029. Positions Ser-1411–Lys-1909 are interaction with SYNM. In terms of domain architecture, WW spans Thr-3044 to Met-3077. The interval Gln-3047–Thr-3397 is interaction with SYNM. A ZZ-type; degenerate zinc finger spans residues Lys-3297–Thr-3353. Zn(2+) is bound by residues Cys-3302, Cys-3305, Cys-3326, and Cys-3329. Residues Asp-3455–Arg-3507 form a binds to SNTB1 region. A phosphoserine mark is found at Ser-3472, Ser-3479, and Ser-3489. Disordered regions lie at residues Lys-3517–Arg-3543 and Gln-3590–Met-3674. Polar residues-rich tracts occupy residues Asn-3596–Pro-3615 and Gln-3651–Arg-3662. A phosphoserine mark is found at Ser-3601, Ser-3602, Ser-3606, Ser-3612, Ser-3613, and Ser-3655.

In terms of assembly, interacts with SYNM. Interacts with the syntrophins SNTG1 and SNTG2. Interacts with KRT19. Component of the dystrophin-associated glycoprotein complex which is composed of three subcomplexes: a cytoplasmic complex comprised of DMD (or UTRN), DTNA and a number of syntrophins, such as SNTB1, SNTB2, SNTG1 and SNTG2, the transmembrane dystroglycan complex, and the sarcoglycan-sarcospan complex. Interacts with DAG1 (betaDAG1) with DMD; the interaction is inhibited by phosphorylation on the PPXY motif of DAG1. Interacts with SYNM; SNTA1 and SNTB1. Interacts with CMYA5. Directly interacts with ANK2 and ANK3; these interactions do not interfere with betaDAG1-binding and are necessary for proper localization in muscle cells. Identified in a dystroglycan complex that contains at least PRX, DRP2, UTRN, DMD and DAG1. Interacts with DTNB. Interacts with PGM5; the interaction is direct. Interacts with NOS1; localizes NOS1 to sarcolemma in muscle cells. In the retina, expressed in the outer plexiform layer (OPL) and around the blood vessels. Also observed at the vitreal border of the retina corresponding to the inner limiting membrane (ILM). Presynaptically localized in cone pedicles and postsynaptically in bipolar cells (at protein level).

Its subcellular location is the cell membrane. The protein resides in the sarcolemma. It is found in the cytoplasm. The protein localises to the cytoskeleton. It localises to the postsynaptic cell membrane. Functionally, anchors the extracellular matrix to the cytoskeleton via F-actin. Ligand for dystroglycan. Component of the dystrophin-associated glycoprotein complex which accumulates at the neuromuscular junction (NMJ) and at a variety of synapses in the peripheral and central nervous systems and has a structural function in stabilizing the sarcolemma. Also implicated in signaling events and synaptic transmission. The sequence is that of Dystrophin from Sus scrofa (Pig).